Here is a 424-residue protein sequence, read N- to C-terminus: GTPase Obg (424 aa).

An Obg domain is found at 1–160 (MFDRVEINIK…YDLILELKLI (160 aa)). In terms of domain architecture, OBG-type G spans 161–328 (ADVAIIGYPN…LLAKVAEKLD (168 aa)). Residues 167-174 (GYPNVGKS), 192-196 (FTTLS), 213-216 (EVPG), 280-283 (NKID), and 309-311 (SAL) each bind GTP. Residues Ser174 and Thr194 each coordinate Mg(2+). The 76-residue stretch at 349–424 (PAPKGKMGFR…IITGRMEWYL (76 aa)) folds into the OCT domain.

It belongs to the TRAFAC class OBG-HflX-like GTPase superfamily. OBG GTPase family. As to quaternary structure, monomer. Requires Mg(2+) as cofactor.

The protein localises to the cytoplasm. An essential GTPase which binds GTP, GDP and possibly (p)ppGpp with moderate affinity, with high nucleotide exchange rates and a fairly low GTP hydrolysis rate. Plays a role in control of the cell cycle, stress response, ribosome biogenesis and in those bacteria that undergo differentiation, in morphogenesis control. This Dehalococcoides mccartyi (strain ATCC BAA-2100 / JCM 16839 / KCTC 5957 / BAV1) protein is GTPase Obg.